Consider the following 537-residue polypeptide: Phosphoenolpyruvate carboxykinase (ATP) (537 aa).

Substrate-binding residues include arginine 61, tyrosine 195, and lysine 201. ATP contacts are provided by residues lysine 201, histidine 220, and 236–244 (GLSGTGKTT). Residues lysine 201 and histidine 220 each coordinate Mn(2+). Aspartate 257 is a Mn(2+) binding site. The ATP site is built by glutamate 285, arginine 323, and threonine 448. Arginine 323 provides a ligand contact to substrate.

The protein belongs to the phosphoenolpyruvate carboxykinase (ATP) family. Mn(2+) serves as cofactor.

It localises to the cytoplasm. It catalyses the reaction oxaloacetate + ATP = phosphoenolpyruvate + ADP + CO2. The protein operates within carbohydrate biosynthesis; gluconeogenesis. Its function is as follows. Involved in the gluconeogenesis. Catalyzes the conversion of oxaloacetate (OAA) to phosphoenolpyruvate (PEP) through direct phosphoryl transfer between the nucleoside triphosphate and OAA. This is Phosphoenolpyruvate carboxykinase (ATP) from Rhodopseudomonas palustris (strain ATCC BAA-98 / CGA009).